The following is a 156-amino-acid chain: Transcription elongation factor GreA (156 aa).

Positions 1-32 form a coiled coil; sequence MKKVRLTREGYEKLKKELEDLKRKFMYEISER.

The protein belongs to the GreA/GreB family.

Its function is as follows. Necessary for efficient RNA polymerase transcription elongation past template-encoded arresting sites. The arresting sites in DNA have the property of trapping a certain fraction of elongating RNA polymerases that pass through, resulting in locked ternary complexes. Cleavage of the nascent transcript by cleavage factors such as GreA or GreB allows the resumption of elongation from the new 3'terminus. GreA releases sequences of 2 to 3 nucleotides. The sequence is that of Transcription elongation factor GreA from Thermotoga sp. (strain RQ2).